Here is a 249-residue protein sequence, read N- to C-terminus: Cobalt transport protein CbiM (249 aa).

The first 27 residues, 1 to 27 (MKPLHRWLPVVIGAALLIIFESRAAYA), serve as a signal peptide directing secretion. The next 6 helical transmembrane spans lie at 33–53 (GFLP…FWVL), 70–90 (LLLG…IPSV), 102–122 (LGTI…VLLF), 134–154 (TLGA…WLIW), 161–181 (APIW…TYVV), and 207–227 (IFAV…VLIF).

It belongs to the CbiM family. In terms of assembly, forms an energy-coupling factor (ECF) transporter complex composed of an ATP-binding protein (A component, CbiO), a transmembrane protein (T component, CbiQ) and 2 possible substrate-capture proteins (S components, CbiM and CbiN) of unknown stoichimetry.

It is found in the cell membrane. The protein operates within cofactor biosynthesis; adenosylcobalamin biosynthesis. Part of the energy-coupling factor (ECF) transporter complex CbiMNOQ involved in cobalt import. The chain is Cobalt transport protein CbiM from Roseiflexus sp. (strain RS-1).